The sequence spans 371 residues: Large ribosomal subunit protein bL27m (371 aa).

The N-terminal 27 residues, 1–27 (MWNPILLDTSSFSFQKHVSGVFLQVRN), are a transit peptide targeting the mitochondrion.

It belongs to the bacterial ribosomal protein bL27 family. In terms of assembly, component of the mitochondrial large ribosomal subunit (mt-LSU). Mature yeast 74S mitochondrial ribosomes consist of a small (37S) and a large (54S) subunit. The 37S small subunit contains a 15S ribosomal RNA (15S mt-rRNA) and 34 different proteins. The 54S large subunit contains a 21S rRNA (21S mt-rRNA) and 46 different proteins.

It localises to the mitochondrion. In terms of biological role, component of the mitochondrial ribosome (mitoribosome), a dedicated translation machinery responsible for the synthesis of mitochondrial genome-encoded proteins, including at least some of the essential transmembrane subunits of the mitochondrial respiratory chain. The mitoribosomes are attached to the mitochondrial inner membrane and translation products are cotranslationally integrated into the membrane. The sequence is that of Large ribosomal subunit protein bL27m (MRP7) from Saccharomyces cerevisiae (strain ATCC 204508 / S288c) (Baker's yeast).